We begin with the raw amino-acid sequence, 383 residues long: NIPA-like protein 2 (383 aa).

Asn-23 and Asn-33 each carry an N-linked (GlcNAc...) asparagine glycan. A run of 7 helical transmembrane segments spans residues 46–66, 88–108, 110–130, 144–164, 177–197, 209–229, and 243–263; these read IHLF…ISLN, VLWW…FAAY, FAPI…SAII, LLGT…APNI, LVGW…CILL, VILL…VKAV, and LTYP…VFQV. N-linked (GlcNAc...) asparagine glycosylation occurs at Asn-274. Helical transmembrane passes span 278-298 and 306-326; these read VVPV…IIFY and FLTV…VFLV. The disordered stretch occupies residues 355-383; the sequence is QPDSHSLSYGTLPDGSDSTKSQSGEKKEV.

This sequence belongs to the NIPA family.

It is found in the membrane. This chain is NIPA-like protein 2 (NIPAL2), found in Homo sapiens (Human).